We begin with the raw amino-acid sequence, 415 residues long: NEDD8-specific protease 2 (415 aa).

The tract at residues 1-42 (MRSNSIFTKEIDSEAVKKSSNLRPPSTGSSNSNGSDTASPKK) is disordered. A compositionally biased stretch (low complexity) spans 26–38 (STGSSNSNGSDTA). At Ser35 the chain carries Phosphoserine. Catalysis depends on residues His171, Asp188, and Cys229. Residues 320–415 (AVTSDSAQPH…QHTQQSIEIH (96 aa)) are disordered. Composition is skewed to polar residues over residues 335–368 (MPSS…NSSP), 379–390 (TASTSVLPTSIL), and 405–415 (IQHTQQSIEIH). Phosphoserine is present on Ser367.

Belongs to the peptidase C48 family.

The protein localises to the cytoplasm. Its subcellular location is the nucleus. In terms of biological role, protease that catalyzes two essential functions in the NEDD8 pathway: processing of full-length NEDD8 to its mature form and deconjugation of NEDD8 from targeted proteins such as the pcu1, pcu2 and pcu4 cullins and other proteins. Has a role in meiosis. The chain is NEDD8-specific protease 2 (nep2) from Schizosaccharomyces pombe (strain 972 / ATCC 24843) (Fission yeast).